The following is a 653-amino-acid chain: Exocyst complex component 7 (653 aa).

An SEC8 and ARHQ binding region spans residues 1-384; the sequence is MIPPQEASAR…TKNKLPGLIT (384 aa). 2 coiled-coil regions span residues 5 to 42 and 63 to 85; these read QEAS…TKNM and VHKQ…SCLD. The residue at position 133 (serine 133) is a Phosphoserine. The disordered stretch occupies residues 238-272; sequence FRKSSSSSGVPYSPAIPNKRKDTPTKKPIKRPGRD.

The protein belongs to the EXO70 family. In terms of assembly, the exocyst complex is composed of EXOC1, EXOC2, EXOC3, EXOC4, EXOC5, EXOC6, EXOC7 and EXOC8. Interacts with ARHQ in a GTP-dependent manner. Interacts with RAB11FIP3.

The protein localises to the cytoplasm. Its subcellular location is the cytosol. The protein resides in the cell membrane. It localises to the midbody. It is found in the midbody ring. Functionally, component of the exocyst complex involved in the docking of exocytic vesicles with fusion sites on the plasma membrane. In adipocytes, plays a crucial role in targeting SLC2A4 vesicle to the plasma membrane in response to insulin, perhaps directing the vesicle to the precise site of fusion. It is required for neuron survival and plays an essential role in cortical development. The chain is Exocyst complex component 7 (Exoc7) from Rattus norvegicus (Rat).